We begin with the raw amino-acid sequence, 2625 residues long: MRNIDEHMSERATLQSSGGYGERDSGVEPIAIIGMSCRLPGEASDPKGLWELLASGKSAWSKVPKDRFNMDAFHDPSNPTAGTTNTAGGHFIEEDLAAFDADFFGMNPVELEALDPQQRLLMEIAYESFENAGLPMKQLWGSNTGVYVGQWSNDYDQNLARDTEFPALYHTIGAGPAISSNRLSYFFNLRGPSFTVDTGCSASLVALHSAVQSLRAGETDASFVGGVNLLLDPQRFSYQSKLKMFSAQGRSYSFDHRANGYGRGEGCCGLVLKRLSAAKRDGDPIRAVIRNSVLNQDGRTPGISVPSGLAQEQAIKAAYSGARLHDGPDFVEAHGTGTAVGDPIEVKAIAAAFATIKTRDGQPIPVGSVKGNVGHTESCAGLAGVIKAVLMLENQTIPPQANFERLNPSLLLDEWNLYVPTVLEQRELRRISVNSFGYGGTNAHVILDRADAPTDQKRDSIFLGLDSAPQPKRKRLLILSATSEEGCSKVAQSLVDYVDQRFDSAATEAWLDRLAYTVNRKSIHSHRTTILASDLEEMLHQLSRVVQVPTPARVDVKSPKVAYVFSGQGAQYYNMGRELINTWPVFTKSLQRANQQLNTLGCEWDLMAELSRDAESSNLDNPAFGQPASTAIQLALCDTLADLGVVPVSVAGHSSGEIAAAYAAHALSFENAMTVSYHRGRLTAALVSKQTSPAGAMLAVGTSPDVAQEYIDSIDGPSSRVTIACYNSPSSVTLSGDIEGIEKLQQMFENKKIFNRLLRTNGAAYHSHHMQQIEEEYRNALEGVEATTAKIPLISSVTGRDSGSEVFGRDYWVENLVSPVRFDEATAQLCQDISLILELGAHETLGGPIRQTLKTLGPDARDVRYLSCLKRKSDAASTLLTTIGEVFADGIHVDLHTANNGFDKKLPRPLSDLPRYPFDHSRRYWHESRVSKEYKHRKFLPHELLGNMSTDVNHLEPKWRRYLKLKEIPWLRNHVVQGQIVFPAAGYLSMALEAVRRYTLSADPEAKISSYAYRNISFGKALVLSDEKLDNEITLSLIPESRTAKESWHDWVEFRIHTVSAGKPWTEHCRGRIRAVLDDSNEDHIEATADKRVVEQALSQSVRFVSPSAFYNLSRQNGLDWHKPFDNLVKIRASRETSVTVTESPRLERDDSLHNDSPYVIHPGTLDTALFHCVCAIVYSQKKIDVPVVPSFISELVIAGNARHAPGTRLVSHAIEVDNGEAHDVVINSAVDGHDQFLIRARGMILAKLPGGTSRSGSRKLTHESTWVPYCQKLTTQHLDRICKKDLPDGSAVEQNDMLNSLTVAFCRAAIEKVSYEQVREGYQQHFYRWMKKIVDGSMLESTPEPFMNGHLTNGLTNGITSNGTKHIPNGLSNGISKHQVNGIANGLPQDASNHIAQKHPDASSLTPKENALKVLTNGLSKDLPNGVSGKHDEFEILKSSSASPGEAAVRRVGENAASILTGEIDPISLLLHDGLLPKMYAEFRNQRCYHQIKAYIAELGLQNPSLRIIEIGGGSASASLPILQACNRDGQSSIAKYDFTDISSGFFLDARKTLADYSEIVDFHVLDIEQDASQQGIEKGSYDIVIACNVIHATVDIDVSLANAKGLLRPNGRLILMEITNPQPYYSLIFGAFPGWWAGAESGRVESPLLRGEQWSEKLIKHGFVDTEPVFRDFEEKQGGTLGVFATTMAEDVSERKPIAHINIVGLPTAPNAWSATDLARVLGKSSEISYIDLNDKSALLAPLRDAVIFLPEICDALTKSITEESFEALQRQIIGSNIVLMLGRGGAIDPSLPNGSLTTGFARTIRLEHPKVRFITLDLDPQSPYESSLTVVNEVLRSPVTDLSKPSADLECEFAERNGQLFVSRVVAEEKAEHYIKNATGKSILHDRNFLSPRNAMRAGLGIVGLLETFHWKPDPGMDGPLGPDQVRVELRAASINFRDILVATGQVQSLTEMKNDCSGVVVESGENMKSRFKPGDRVCAYYGQSYSNFPVVDGDCCSRIPDSMSFEVAASVPIVWGTVYHSLVDIAHLAEGEKILIHSGAGAVGQAAIALAQHLGAEVFTTAGSDQKRAMLAEKFNLPNDHIFSSRNTHFKQGIKELTKGQGVDVILNSLTGEMTRASCEVLTDFGRFIEIGKKDLIDDALLPTKFLLRNITFACVDLTQIIEKRHKQARRLLEKVVDLLASDAVKATEITTYPISEIEHAFRFVASGKHIGKVILTVAQDEVVKVSSASEYLTKSYTDLVQAASAPPQLAQLQTDAVYIVVGGLGGLGRCVVPWLADRGARTIVTLSRSGASSEQATTLIEEMQSRGVSVVAKACDIGSKESLRGVVEDIKGSLSLPIRGLINSAMSLQDVTFKDMTHEQWQKSLLPKVQGTWNLHECLPKDLDFFISMSSIVAISGNLGQSNYGAACSFQDSFAAFRRAQGLSGYSINIGPVSDAGFVSENEQVNMGMERKGFSSVTIAEVLANLDYVVTSAGNRTQNSIGLLPARPDASRSTWLQNKRLIHLAQHSGPRGEGEGGKSDEAQDALEAVGNATTAEGAEAAVLTAILQQLSKLLMTPVEQLSPRRTLDSYGVDSLIAVELKNWIGTYLEADIPLLVLRETNDIQHLARLAAEESRLVSLA.

Over residues 1–10 (MRNIDEHMSE) the composition is skewed to basic and acidic residues. Positions 1–25 (MRNIDEHMSERATLQSSGGYGERDS) are disordered. The Ketosynthase family 3 (KS3) domain maps to 27–449 (VEPIAIIGMS…GTNAHVILDR (423 aa)). Active-site for beta-ketoacyl synthase activity residues include Cys-200, His-334, and His-375. Positions 563–883 (YVFSGQGAQY…DAASTLLTTI (321 aa)) are malonyl-CoA:ACP transacylase (MAT) domain. The tract at residues 942-1080 (HELLGNMSTD…GRIRAVLDDS (139 aa)) is N-terminal hotdog fold. The dehydratase (DH) domain stretch occupies residues 942–1252 (HELLGNMSTD…GMILAKLPGG (311 aa)). A PKS/mFAS DH domain is found at 942–1255 (HELLGNMSTD…LAKLPGGTSR (314 aa)). Catalysis depends on His-974, which acts as the Proton acceptor; for dehydratase activity. Positions 1102–1255 (VRFVSPSAFY…LAKLPGGTSR (154 aa)) are C-terminal hotdog fold. The Proton donor; for dehydratase activity role is filled by Asp-1167. Residues 1490-1673 (YHQIKAYIAE…GFVDTEPVFR (184 aa)) form a methyltransferase (CMet) domain region. The enoyl reductase (ER) domain stretch occupies residues 1907–2220 (GLLETFHWKP…SGKHIGKVIL (314 aa)). Residues 2261–2439 (AVYIVVGGLG…GYSINIGPVS (179 aa)) are ketoreductase (KR) domain. One can recognise a Carrier domain in the interval 2542-2619 (GAEAAVLTAI…HLARLAAEES (78 aa)). Ser-2579 bears the O-(pantetheine 4'-phosphoryl)serine mark.

It functions in the pathway antifungal biosynthesis. Functionally, highly reducing polyketide synthase; part of the gene cluster that mediates the biosynthesis of the antifungal antibiotic FR901469, an inhibitor of beta-1,3-glucansynthase, exerting antifungal activity against the pathogenes Candida albicans and Aspergillus fumigatus. FR901469 is a cyclic depsipeptide containing 12 amino acid residues and a fatty acid chain. The NRPS frbI contains 12 modules responsible for the formation of the depsipeptide backbone which is denoted as Acyl-Thr-Ala-Tyr-Val-4OHPro-Thr-Thr-3OHPro-threo3OHGln-Gly-Thr-Orn-OH (C71H116N14O23). The PKS frbB is probably involved in the production of the hydrocarbon chain, and the acyl-CoA ligase frbC might be involved in the transport of the chain to the peptide ptoduct of frbI. Because FR901469 contains 3 hydroxylated amino acid residues, the 3 oxygenases frbA, frbH, and frbJ might be participating in amino acid hydroxylation. As no thioesterase domains were detected in frbI or frbB, the thioesterases frbD and frbE may instead release and cyclize the products of the NRPS and PKS, respectively. The chain is Highly reducing polyketide synthase frbB from Dothideomycetidae sp. (strain 11243) (Fungal sp. (strain No.11243)).